The following is a 199-amino-acid chain: DnaJ homolog subfamily C member 5B (199 aa).

At Ser-14 the chain carries Phosphoserine. Residues Ala-19 to Gly-84 enclose the J domain.

In terms of assembly, interacts with the chaperone complex consisting of HSC70 and SGTA. In terms of processing, palmitoylated. Palmitoylation is not required for membrane association. As to expression, testis specific.

It is found in the membrane. This chain is DnaJ homolog subfamily C member 5B (DNAJC5B), found in Homo sapiens (Human).